The sequence spans 216 residues: Somatotropin (216 aa).

Residues 1–26 (MAAGPRTSVLLAFTLLCLPWPQEAGA) form the signal peptide. His-45 is a Zn(2+) binding site. Cys-78 and Cys-189 are oxidised to a cystine. Position 131 is a phosphoserine (Ser-131). Glu-198 provides a ligand contact to Zn(2+). The cysteines at positions 206 and 214 are disulfide-linked.

Belongs to the somatotropin/prolactin family.

Its subcellular location is the secreted. Plays an important role in growth control. Its major role in stimulating body growth is to stimulate the liver and other tissues to secrete IGF1. It stimulates both the differentiation and proliferation of myoblasts. It also stimulates amino acid uptake and protein synthesis in muscle and other tissues. The polypeptide is Somatotropin (GH1) (Camelus dromedarius (Dromedary)).